A 784-amino-acid chain; its full sequence is LPS-assembly protein LptD (784 aa).

An N-terminal signal peptide occupies residues M1–A24. Intrachain disulfides connect C31–C724 and C173–C725.

The protein belongs to the LptD family. As to quaternary structure, component of the lipopolysaccharide transport and assembly complex. Interacts with LptE and LptA. May interact with LptE during assembly of LptD by the beta-barrel assembly machine (BAM). Also interacts with LptM, which promotes the efficient assembly of the LptDE translocon by the BAM complex. In terms of processing, contains two intramolecular disulfide bonds. At least one disulfide bond is required for activity, and protein is probably fully oxidized in vivo.

Its subcellular location is the cell outer membrane. Its function is as follows. Together with LptE, is involved in the assembly of lipopolysaccharide (LPS) at the surface of the outer membrane. Contributes to n-hexane resistance. The chain is LPS-assembly protein LptD from Escherichia coli (strain K12).